A 191-amino-acid chain; its full sequence is Nucleoside triphosphate pyrophosphatase (191 aa).

D70 (proton acceptor) is an active-site residue.

It belongs to the Maf family. It depends on a divalent metal cation as a cofactor.

The protein localises to the cytoplasm. The catalysed reaction is a ribonucleoside 5'-triphosphate + H2O = a ribonucleoside 5'-phosphate + diphosphate + H(+). It carries out the reaction a 2'-deoxyribonucleoside 5'-triphosphate + H2O = a 2'-deoxyribonucleoside 5'-phosphate + diphosphate + H(+). Its function is as follows. Nucleoside triphosphate pyrophosphatase. May have a dual role in cell division arrest and in preventing the incorporation of modified nucleotides into cellular nucleic acids. The sequence is that of Nucleoside triphosphate pyrophosphatase from Synechococcus sp. (strain WH7803).